A 381-amino-acid chain; its full sequence is Alpha-methylacyl-CoA racemase (381 aa).

Residues R36 and 54 to 57 (LDLK) contribute to the substrate site. K57 bears the N6-acetyllysine mark. An N6-acetyllysine; alternate mark is found at K86 and K100. Residues K86 and K100 each carry the N6-succinyllysine; alternate modification. Residue K117 is modified to N6-acetyllysine. Residue 120-125 (GHDINY) participates in substrate binding. H121 serves as the catalytic Proton acceptor. D151 serves as the catalytic Proton donor. The residue at position 267 (K267) is an N6-succinyllysine. Residues 316–344 (TDGEQLPSPRPAPLLSRTPAVPSAKRDPS) form a disordered region. The short motif at 379–381 (ANL) is the Microbody targeting signal element.

This sequence belongs to the CoA-transferase III family. In terms of assembly, monomer.

Its subcellular location is the peroxisome. It is found in the mitochondrion. It carries out the reaction a (2S)-2-methylacyl-CoA = a (2R)-2-methylacyl-CoA. The catalysed reaction is (25R)-3alpha,7alpha,12alpha-trihydroxy-5beta-cholestan-26-oyl-CoA = (25S)-3alpha,7alpha,12alpha-trihydroxy-5beta-cholestan-26-oyl-CoA. It catalyses the reaction (2R,6)-dimethylheptanoyl-CoA = (2S,6)-dimethylheptanoyl-CoA. Its pathway is lipid metabolism; bile acid biosynthesis. The protein operates within lipid metabolism; fatty acid metabolism. Its function is as follows. Catalyzes the interconversion of (R)- and (S)-stereoisomers of alpha-methyl-branched-chain fatty acyl-CoA esters. Acts only on coenzyme A thioesters, not on free fatty acids, and accepts as substrates a wide range of alpha-methylacyl-CoAs, including pristanoyl-CoA, trihydroxycoprostanoyl-CoA (an intermediate in bile acid synthesis), and arylpropionic acids like the anti-inflammatory drug ibuprofen (2-(4-isobutylphenyl)propionic acid) but neither 3-methyl-branched nor linear-chain acyl-CoAs. The protein is Alpha-methylacyl-CoA racemase (Amacr) of Mus musculus (Mouse).